We begin with the raw amino-acid sequence, 387 residues long: Dual specificity mitogen-activated protein kinase kinase mek-2 (387 aa).

A disordered region spans residues 1 to 37 (MSSGKRRNPLGLSLPPTVNEQSESGEATAEEATATVP). Residues 16-25 (PTVNEQSESG) are compositionally biased toward polar residues. Residues 26-35 (EATAEEATAT) are compositionally biased toward low complexity. The Protein kinase domain occupies 73 to 360 (LQTEGELGHG…LKSLTADVFF (288 aa)). Residues 79 to 87 (LGHGNGGVV) and lysine 102 contribute to the ATP site. Aspartate 195 acts as the Proton acceptor in catalysis. 2 positions are modified to phosphoserine: serine 223 and serine 227.

It belongs to the protein kinase superfamily. STE Ser/Thr protein kinase family. MAP kinase kinase subfamily. As to quaternary structure, interacts with ksr-1.

The enzyme catalyses L-seryl-[protein] + ATP = O-phospho-L-seryl-[protein] + ADP + H(+). It carries out the reaction L-threonyl-[protein] + ATP = O-phospho-L-threonyl-[protein] + ADP + H(+). It catalyses the reaction L-tyrosyl-[protein] + ATP = O-phospho-L-tyrosyl-[protein] + ADP + H(+). Its activity is regulated as follows. Activated by tyrosine and threonine phosphorylation catalyzed by MAP kinase kinase kinases. Functions in the let-60 Ras signaling pathway; acts downstream of lin-45 raf kinase, but before the sur-1/mpk-1 gene product in controlling vulval cell differentiation. Required for progression of developing oocytes through the pachytene stage. Plays a role in responses to M.nematophilum-mediated bacterial infection by promoting tail swelling and preventing constipation. Involved in fluid homeostasis. Positively regulates lifespan upstream of mpk-1. In Caenorhabditis elegans, this protein is Dual specificity mitogen-activated protein kinase kinase mek-2 (mek-2).